Consider the following 1013-residue polypeptide: Probable beta-galactosidase B (1013 aa).

A signal peptide spans 1 to 21 (MTRILNCLLVLLACLGVSSKA). Residue Tyr90 coordinates substrate. N-linked (GlcNAc...) asparagine glycosylation is present at Asn100. Residues Asn135, Ala136, Glu137, and Asn195 each coordinate substrate. Glu196 serves as the catalytic Proton donor. N-linked (GlcNAc...) asparagine glycosylation is present at Asn211. Substrate is bound at residue Tyr265. Cys271 and Cys324 are joined by a disulfide. The Nucleophile role is filled by Glu308. Substrate is bound at residue Tyr373. N-linked (GlcNAc...) asparagine glycosylation is found at Asn411, Asn442, Asn456, Asn626, Asn735, Asn768, and Asn775.

This sequence belongs to the glycosyl hydrolase 35 family.

It is found in the secreted. It catalyses the reaction Hydrolysis of terminal non-reducing beta-D-galactose residues in beta-D-galactosides.. Its function is as follows. Cleaves beta-linked terminal galactosyl residues from gangliosides, glycoproteins, and glycosaminoglycans. The protein is Probable beta-galactosidase B (lacB) of Penicillium rubens (strain ATCC 28089 / DSM 1075 / NRRL 1951 / Wisconsin 54-1255) (Penicillium chrysogenum).